Here is a 1489-residue protein sequence, read N- to C-terminus: Chromatin-remodeling ATPase INO80 (1489 aa).

Phosphoserine is present on residues Ser65, Ser115, and Ser133. Disordered regions lie at residues 137-311 (NEKD…KLSM) and 393-452 (KRER…GLPT). 2 stretches are compositionally biased toward acidic residues: residues 140-164 (DADEDEEDDEDELEDGEEDMEEDEA) and 214-291 (DENE…DFNP). The span at 301 to 311 (SSSSSSTKLSM) shows a compositional bias: low complexity. Basic and acidic residues predominate over residues 393-402 (KREREREEAL). In terms of domain architecture, DBINO spans 476–601 (IWKDMARKDS…SHFIGRKIKT (126 aa)). Ser610 bears the Phosphoserine mark. The 173-residue stretch at 718-890 (ANLYDQGING…WALLHFIMPS (173 aa)) folds into the Helicase ATP-binding domain. Position 731–738 (731–738 (DEMGLGKT)) interacts with ATP. Positions 841-844 (DEAQ) match the DEAQ box motif. One can recognise a Helicase C-terminal domain in the interval 1303–1467 (KLDELLVKLK…TIEVGENDSE (165 aa)). The segment at 1456–1489 (IKTIEVGENDSEVTREGSKSISQDGIKEAASALA) is disordered.

Belongs to the SNF2/RAD54 helicase family. As to quaternary structure, component of the chromatin-remodeling INO80 complex, at least composed of ARP4, ARP5, ARP8, RVB1, RVB2, TAF14, NHP10, IES1, IES3, IES4, IES6, ACT1, IES2, IES5 and INO80.

It is found in the nucleus. It carries out the reaction ATP + H2O = ADP + phosphate + H(+). Functionally, ATPase component of the INO80 complex which remodels chromatin by shifting nucleosomes and is involved in DNA repair. Its ability to induce transcription of some phosphate-responsive genes is modulated by inositol polyphosphates. The INO80 complex is involved in DNA repair by associating with 'Ser-129' phosphorylated H2A histones as a response to DNA damage. This chain is Chromatin-remodeling ATPase INO80 (INO80), found in Saccharomyces cerevisiae (strain ATCC 204508 / S288c) (Baker's yeast).